The chain runs to 428 residues: Serine--tRNA ligase (428 aa).

237–239 (TAE) contributes to the L-serine binding site. 268–270 (RSE) contacts ATP. An L-serine-binding site is contributed by E291. 355–358 (EISS) serves as a coordination point for ATP. An L-serine-binding site is contributed by S390.

This sequence belongs to the class-II aminoacyl-tRNA synthetase family. Type-1 seryl-tRNA synthetase subfamily. Homodimer. The tRNA molecule binds across the dimer.

The protein localises to the cytoplasm. It catalyses the reaction tRNA(Ser) + L-serine + ATP = L-seryl-tRNA(Ser) + AMP + diphosphate + H(+). The catalysed reaction is tRNA(Sec) + L-serine + ATP = L-seryl-tRNA(Sec) + AMP + diphosphate + H(+). It functions in the pathway aminoacyl-tRNA biosynthesis; selenocysteinyl-tRNA(Sec) biosynthesis; L-seryl-tRNA(Sec) from L-serine and tRNA(Sec): step 1/1. In terms of biological role, catalyzes the attachment of serine to tRNA(Ser). Is also able to aminoacylate tRNA(Sec) with serine, to form the misacylated tRNA L-seryl-tRNA(Sec), which will be further converted into selenocysteinyl-tRNA(Sec). The protein is Serine--tRNA ligase of Hydrogenovibrio crunogenus (strain DSM 25203 / XCL-2) (Thiomicrospira crunogena).